An 835-amino-acid polypeptide reads, in one-letter code: Replication origin-binding protein (835 aa).

In terms of domain architecture, Helicase ATP-binding spans 54-215 (PGMSQTRPVT…SGLRGDENIH (162 aa)). Position 67-74 (67-74 (APMGSGKT)) interacts with ATP.

Belongs to the herpesviridae OriBP family. As to quaternary structure, homodimer. Interacts with the major DNA-binding protein. Interacts with the helicase/primase component 52 and the polymerase accessory protein.

Its subcellular location is the host nucleus. Functionally, functions as a docking protein to recruit essential components of the viral replication machinery to viral DNA origins. In the presence of the major DNA-binding protein, opens dsDNA leading to a conformational change in the origin that facilitates DNA unwinding and subsequent replication. This is Replication origin-binding protein from Homo sapiens (Human).